A 309-amino-acid polypeptide reads, in one-letter code: Tagatose-6-phosphate kinase (309 aa).

The protein belongs to the carbohydrate kinase PfkB family. LacC subfamily.

The enzyme catalyses D-tagatofuranose 6-phosphate + ATP = D-tagatofuranose 1,6-bisphosphate + ADP + H(+). It functions in the pathway carbohydrate metabolism; D-tagatose 6-phosphate degradation; D-glyceraldehyde 3-phosphate and glycerone phosphate from D-tagatose 6-phosphate: step 1/2. The polypeptide is Tagatose-6-phosphate kinase (Streptococcus pneumoniae (strain Hungary19A-6)).